The primary structure comprises 404 residues: Glutamate-pyruvate aminotransferase AlaA (404 aa).

L-alanine is bound by residues Gly41 and Asn179. Residue Lys240 is modified to N6-(pyridoxal phosphate)lysine. L-alanine is bound at residue Arg378.

Belongs to the class-I pyridoxal-phosphate-dependent aminotransferase family. Homodimer. The cofactor is pyridoxal 5'-phosphate.

The catalysed reaction is L-alanine + 2-oxoglutarate = pyruvate + L-glutamate. It participates in amino-acid biosynthesis; L-alanine biosynthesis. Its function is as follows. Involved in the biosynthesis of alanine. Catalyzes the transamination of pyruvate by glutamate, leading to the formation of L-alanine and 2-oxoglutarate. Is also able to catalyze the reverse reaction. The chain is Glutamate-pyruvate aminotransferase AlaA (alaA) from Haemophilus influenzae (strain ATCC 51907 / DSM 11121 / KW20 / Rd).